The primary structure comprises 63 residues: MLGQSIRRFTTSVVRRSHYEEGPGKNLPFSVENKWSLLAKMCLYFGSAFATPFLVVRHQLLKT.

The transit peptide at 1–16 (MLGQSIRRFTTSVVRR) directs the protein to the mitochondrion. Residues 17–33 (SHYEEGPGKNLPFSVEN) lie on the Mitochondrial matrix side of the membrane. The residue at position 25 (Lys-25) is an N6-acetyllysine; alternate. N6-succinyllysine; alternate is present on Lys-25. The chain crosses the membrane as a helical span at residues 34 to 60 (KWSLLAKMCLYFGSAFATPFLVVRHQL). The Mitochondrial intermembrane portion of the chain corresponds to 61 to 63 (LKT).

This sequence belongs to the cytochrome c oxidase VIIc family. As to quaternary structure, component of the cytochrome c oxidase (complex IV, CIV), a multisubunit enzyme composed of 14 subunits. The complex is composed of a catalytic core of 3 subunits MT-CO1, MT-CO2 and MT-CO3, encoded in the mitochondrial DNA, and 11 supernumerary subunits COX4I1 (or COX4I2), COX5A, COX5B, COX6A1 (or COX6A2), COX6B1 (or COX6B2), COX6C, COX7A2 (or COX7A1), COX7B, COX7C, COX8A and NDUFA4, which are encoded in the nuclear genome. The complex exists as a monomer or a dimer and forms supercomplexes (SCs) in the inner mitochondrial membrane with NADH-ubiquinone oxidoreductase (complex I, CI) and ubiquinol-cytochrome c oxidoreductase (cytochrome b-c1 complex, complex III, CIII), resulting in different assemblies (supercomplex SCI(1)III(2)IV(1) and megacomplex MCI(2)III(2)IV(2)). Interacts with RAB5IF.

The protein localises to the mitochondrion inner membrane. It participates in energy metabolism; oxidative phosphorylation. Functionally, component of the cytochrome c oxidase, the last enzyme in the mitochondrial electron transport chain which drives oxidative phosphorylation. The respiratory chain contains 3 multisubunit complexes succinate dehydrogenase (complex II, CII), ubiquinol-cytochrome c oxidoreductase (cytochrome b-c1 complex, complex III, CIII) and cytochrome c oxidase (complex IV, CIV), that cooperate to transfer electrons derived from NADH and succinate to molecular oxygen, creating an electrochemical gradient over the inner membrane that drives transmembrane transport and the ATP synthase. Cytochrome c oxidase is the component of the respiratory chain that catalyzes the reduction of oxygen to water. Electrons originating from reduced cytochrome c in the intermembrane space (IMS) are transferred via the dinuclear copper A center (CU(A)) of subunit 2 and heme A of subunit 1 to the active site in subunit 1, a binuclear center (BNC) formed by heme A3 and copper B (CU(B)). The BNC reduces molecular oxygen to 2 water molecules using 4 electrons from cytochrome c in the IMS and 4 protons from the mitochondrial matrix. The sequence is that of Cytochrome c oxidase subunit 7C, mitochondrial (COX7C) from Homo sapiens (Human).